Here is a 343-residue protein sequence, read N- to C-terminus: Thromboxane A2 receptor (343 aa).

Topologically, residues 1–29 are extracellular; it reads MWPNGSSLGPCFRPTNITLEERRLIASPW. N-linked (GlcNAc...) asparagine glycans are attached at residues Asn4 and Asn16. Residues 30–52 traverse the membrane as a helical segment; sequence FAASFCVVGLASNLLALSVLAGA. Over 53–66 the chain is Cytoplasmic; the sequence is RQGGSHTRSSFLTF. A helical transmembrane segment spans residues 67–87; sequence LCGLVLTDFLGLLVTGAIVVS. Residues 88 to 106 lie on the Extracellular side of the membrane; the sequence is QHAALFEWHAVDPGCRLCR. A disulfide bridge connects residues Cys105 and Cys183. The chain crosses the membrane as a helical span at residues 107 to 128; it reads FMGVVMIFFGLSPLLLGATMAS. Over 129-149 the chain is Cytoplasmic; sequence ERFLGITRPFSRPVVTSQRRA. The helical transmembrane segment at 150 to 172 threads the bilayer; the sequence is WATVGLVWAAALALGLLPLLGLG. Residues 173-193 lie on the Extracellular side of the membrane; the sequence is RYTVQYPGSWCFLTLGAESGD. A helical membrane pass occupies residues 194-219; the sequence is VAFGLLFSMLGGLSVGLSFLLNTVSV. The Cytoplasmic segment spans residues 220–246; the sequence is ATLCHVYHGQEAAQQRPRDSEVEMMAQ. The helical transmembrane segment at 247–270 threads the bilayer; that stretch reads LLGIMLVASVCWLPLLVFIAQTVL. Topologically, residues 271-289 are extracellular; that stretch reads RNPPAMSPSGQLSRATEQE. The helical transmembrane segment at 290–311 threads the bilayer; that stretch reads LLIYLRVATWNQILDPWVYILF. The Cytoplasmic portion of the chain corresponds to 312-343; it reads RRAVLRRLQPRLSTRPRSLSLQPQLTQRSGLQ. Phosphoserine occurs at positions 329 and 331.

It belongs to the G-protein coupled receptor 1 family. In terms of assembly, interacts with RPGRIP1L. Interacts with RACK1; the interaction regulates TBXA2R cell surface expression.

The protein resides in the cell membrane. Receptor for thromboxane A2 (TXA2), a potent stimulator of platelet aggregation. The activity of this receptor is mediated by a G-protein that activates a phosphatidylinositol-calcium second messenger system. In the kidney, the binding of TXA2 to glomerular TP receptors causes intense vasoconstriction. Activates phospholipase C and adenylyl cyclase. This Chlorocebus aethiops (Green monkey) protein is Thromboxane A2 receptor (TBXA2R).